A 207-amino-acid chain; its full sequence is dITP/XTP pyrophosphatase (207 aa).

Position 7–12 (7–12 (SNNAKK)) interacts with substrate. D72 acts as the Proton acceptor in catalysis. D72 is a binding site for Mg(2+). Residues S73, 155–158 (FGYD), K184, and 189–190 (HR) contribute to the substrate site.

The protein belongs to the HAM1 NTPase family. As to quaternary structure, homodimer. Requires Mg(2+) as cofactor.

It carries out the reaction XTP + H2O = XMP + diphosphate + H(+). The enzyme catalyses dITP + H2O = dIMP + diphosphate + H(+). It catalyses the reaction ITP + H2O = IMP + diphosphate + H(+). Pyrophosphatase that catalyzes the hydrolysis of nucleoside triphosphates to their monophosphate derivatives, with a high preference for the non-canonical purine nucleotides XTP (xanthosine triphosphate), dITP (deoxyinosine triphosphate) and ITP. Seems to function as a house-cleaning enzyme that removes non-canonical purine nucleotides from the nucleotide pool, thus preventing their incorporation into DNA/RNA and avoiding chromosomal lesions. This chain is dITP/XTP pyrophosphatase, found in Corynebacterium efficiens (strain DSM 44549 / YS-314 / AJ 12310 / JCM 11189 / NBRC 100395).